Reading from the N-terminus, the 213-residue chain is Ribosomal RNA small subunit methyltransferase G (213 aa).

S-adenosyl-L-methionine contacts are provided by residues G75, F80, 128 to 129 (IE), and R144.

It belongs to the methyltransferase superfamily. RNA methyltransferase RsmG family.

The protein resides in the cytoplasm. It catalyses the reaction guanosine(527) in 16S rRNA + S-adenosyl-L-methionine = N(7)-methylguanosine(527) in 16S rRNA + S-adenosyl-L-homocysteine. In terms of biological role, specifically methylates the N7 position of guanine in position 527 of 16S rRNA. This Brucella anthropi (strain ATCC 49188 / DSM 6882 / CCUG 24695 / JCM 21032 / LMG 3331 / NBRC 15819 / NCTC 12168 / Alc 37) (Ochrobactrum anthropi) protein is Ribosomal RNA small subunit methyltransferase G.